We begin with the raw amino-acid sequence, 528 residues long: Ladinin-1 (528 aa).

Positions 1–404 (MSVSRKDWSA…NSETPLTRSA (404 aa)) are disordered. Residues S38, S56, S62, S72, and S76 each carry the phosphoserine modification. A compositionally biased stretch (basic residues) spans 88-97 (RTRKERRQRR). S119 is subject to Phosphoserine. Positions 134–173 (KKVEALPRRRLSREQRGPWAQDEERLKNRELAEGEKRLPE) are enriched in basic and acidic residues. SEK repeat units follow at residues 184–186 (SEK), 190–192 (SEK), 202–204 (SEK), and 208–210 (SEK). Residues 184-281 (SEKTPVSEKT…MQERKLVSEK (98 aa)) are 6 X SEK repeats. Composition is skewed to basic and acidic residues over residues 218–231 (SLTE…KLVP) and 267–279 (IVSE…KLVS). SEK repeat units lie at residues 269–271 (SEK) and 279–281 (SEK). A compositionally biased stretch (polar residues) spans 304–316 (EQPQTTGGSQATT). S328, S358, S367, S405, and S496 each carry phosphoserine. Residues 365-377 (TPSPTLLTYSSSL) show a composition bias toward low complexity. Residues 492 to 528 (KTQDSGDHGSQEVRKEASVTKRAQWGSKPSTSLDAEV) form a disordered region. A compositionally biased stretch (basic and acidic residues) spans 495 to 510 (DSGDHGSQEVRKEASV). Polar residues predominate over residues 518 to 528 (SKPSTSLDAEV).

As to expression, expressed in kidney, lung and keratinocytes followed by liver, spleen and brain. Not expressed in testis, skeletal and heart muscle and in fibroblasts.

It localises to the secreted. It is found in the extracellular space. The protein resides in the extracellular matrix. The protein localises to the basement membrane. In terms of biological role, anchoring filament protein which is a component of the basement membrane zone. This Mus musculus (Mouse) protein is Ladinin-1 (Lad1).